The chain runs to 212 residues: Ribosomal RNA small subunit methyltransferase G (212 aa).

S-adenosyl-L-methionine contacts are provided by residues Gly73, Phe78, Glu96–Ser98, Val124–Glu125, and Arg141.

Belongs to the methyltransferase superfamily. RNA methyltransferase RsmG family.

The protein localises to the cytoplasm. Functionally, specifically methylates the N7 position of a guanine in 16S rRNA. The protein is Ribosomal RNA small subunit methyltransferase G of Aster yellows witches'-broom phytoplasma (strain AYWB).